A 395-amino-acid polypeptide reads, in one-letter code: E3 ubiquitin-protein ligase NHLRC1 (395 aa).

Residues 26–72 (CKVCFEKFGHRQQRRPRNLSCGHVVCLACVAALAHPRTLALECPFCR) form an RING-type zinc finger. NHL repeat units lie at residues 113 to 157 (ALTC…FDSG), 161 to 204 (AHQF…FDFF), 205 to 245 (GQIK…LDVD), 248 to 300 (EGVL…FSSS), 301 to 349 (MQLV…LGKP), and 350 to 393 (EEFP…YKVD).

Interacts with AGL. Interacts (via the NHL repeats) with EPM2A/laforin. Forms a complex with EPM2A/laforin and HSP70. Interacts with PRDM8. In terms of tissue distribution, expressed in brain, cerebellum, spinal cord, medulla, heart, liver, skeletal muscle and pancreas.

It is found in the endoplasmic reticulum. It localises to the nucleus. The enzyme catalyses S-ubiquitinyl-[E2 ubiquitin-conjugating enzyme]-L-cysteine + [acceptor protein]-L-lysine = [E2 ubiquitin-conjugating enzyme]-L-cysteine + N(6)-ubiquitinyl-[acceptor protein]-L-lysine.. Its pathway is protein modification; protein ubiquitination. In terms of biological role, E3 ubiquitin-protein ligase. Together with the phosphatase EPM2A/laforin, appears to be involved in the clearance of toxic polyglucosan and protein aggregates via multiple pathways. In complex with EPM2A/laforin and HSP70, suppresses the cellular toxicity of misfolded proteins by promoting their degradation through the ubiquitin-proteasome system (UPS). Ubiquitinates the glycogen-targeting protein phosphatase subunits PPP1R3C/PTG and PPP1R3D in a laforin-dependent manner and targets them for proteasome-dependent degradation, thus decreasing glycogen accumulation. Polyubiquitinates EPM2A/laforin and ubiquitinates AGL and targets them for proteasome-dependent degradation. Also promotes proteasome-independent protein degradation through the macroautophagy pathway. This is E3 ubiquitin-protein ligase NHLRC1 (NHLRC1) from Homo sapiens (Human).